The primary structure comprises 504 residues: Sodium-coupled neutral amino acid transporter 3 (504 aa).

Position 52 is a phosphoserine; by PKC (Ser52). Asn73 carries N-linked (GlcNAc...) asparagine glycosylation. The next 5 membrane-spanning stretches (helical) occupy residues 82–102 (GILG…LFLL), 105–125 (VALL…IVGI), 143–163 (AAAL…LYII), 186–206 (MDGN…LALM), and 212–232 (LGYS…AVIY). Cys239 and Cys275 are joined by a disulfide. Residues Asn247 and Asn251 are each glycosylated (N-linked (GlcNAc...) asparagine). The chain crosses the membrane as a helical span at residues 287-307 (AYTIPIMAFAFVCHPEVLPIY). Asn323 carries N-linked (GlcNAc...) asparagine glycosylation. 5 helical membrane-spanning segments follow: residues 324 to 344 (LSIA…YLTF), 366 to 386 (ILCV…IVLF), 408 to 428 (VLIA…APNI), 431 to 451 (IFGI…PAIF), and 469 to 489 (ILAL…LSFI).

The protein belongs to the amino acid/polyamine transporter 2 family. Post-translationally, phosphorylation at Ser-52 induces internalization and sequestration into an intracellular reservoir. During dephosphorylation by protein phosphatases, can recycle back to the plasma membrane and regain activity. Prolonged phosphorylation results in its degradation. In terms of tissue distribution, highly expressed in liver. Expressed in skeletal muscle. Expressed in kidney, heart and brain. Not detected in gut, lung or spleen. Expressed ubiquitously in hepatocytes in liver whereas in kidney expression is restricted to the medulla. Within brain, expressed in glial cells. In the cerebellum, expressed on Bergmann glial fibers in the molecular layer and astrocytes in the granule layer. Expressed in brain kidney and liver (at protein level). In the adult kidney, highly expressed in the outer strip of the outer medulla and medullary rays penetrating into the kidney cortex (at protein level).

It localises to the cell membrane. The protein localises to the basolateral cell membrane. The enzyme catalyses L-glutamine(out) + Na(+)(out) + H(+)(in) = L-glutamine(in) + Na(+)(in) + H(+)(out). The catalysed reaction is L-asparagine(out) + Na(+)(out) + H(+)(in) = L-asparagine(in) + Na(+)(in) + H(+)(out). It carries out the reaction L-histidine(out) + Na(+)(out) + H(+)(in) = L-histidine(in) + Na(+)(in) + H(+)(out). With respect to regulation, L-glutamine efflux and L-glutamine uptake are regulated by CO2/HCO3(-) through SLC4A4 leading to modulation of cytosolic pH and Na(+)concentration. Symporter that cotransports specific neutral amino acids and sodium ions, coupled to an H(+) antiporter activity. Mainly participates in the glutamate-GABA-glutamine cycle in brain where it transports L-glutamine from astrocytes in the intercellular space for the replenishment of both neurotransmitters glutamate and gamma-aminobutyric acid (GABA) in neurons. Also functions as the major influx transporter in ganglion cells mediating the uptake of glutamine. The transport activity is specific for L-glutamine, L-histidine and L-asparagine. The transport is electroneutral coupled to the cotransport of 1 Na(+) and the antiport of 1 H(+), pH dependent, saturable, Li(+) tolerant and functions in both direction depending on the concentration gradients of its substrates and cotransported ions. Also mediates an amino acid-gated H(+) conductance that is not stoichiometrically coupled to the amino acid transport but which influences the ionic gradients that drive the amino acid transport. In addition, may play a role in nitrogen metabolism, amino acid homeostasis, glucose metabolism and renal ammoniagenesis. The polypeptide is Sodium-coupled neutral amino acid transporter 3 (Rattus norvegicus (Rat)).